The primary structure comprises 350 residues: tRNA-splicing endonuclease (350 aa).

Residues Tyr286, His297, and Lys328 contribute to the active site.

This sequence belongs to the tRNA-intron endonuclease family. Archaeal long subfamily. As to quaternary structure, homodimer.

It carries out the reaction pretRNA = a 3'-half-tRNA molecule with a 5'-OH end + a 5'-half-tRNA molecule with a 2',3'-cyclic phosphate end + an intron with a 2',3'-cyclic phosphate and a 5'-hydroxyl terminus.. In terms of biological role, endonuclease that removes tRNA introns. Cleaves pre-tRNA at the 5'- and 3'-splice sites to release the intron. The products are an intron and two tRNA half-molecules bearing 2',3' cyclic phosphate and 5'-OH termini. Recognizes a pseudosymmetric substrate in which 2 bulged loops of 3 bases are separated by a stem of 4 bp. This is tRNA-splicing endonuclease from Methanosarcina acetivorans (strain ATCC 35395 / DSM 2834 / JCM 12185 / C2A).